We begin with the raw amino-acid sequence, 297 residues long: Malonyl-[acyl-carrier protein] O-methyltransferase (297 aa).

The protein belongs to the methyltransferase superfamily.

It carries out the reaction malonyl-[ACP] + S-adenosyl-L-methionine = malonyl-[ACP] methyl ester + S-adenosyl-L-homocysteine. The protein operates within cofactor biosynthesis; biotin biosynthesis. Converts the free carboxyl group of a malonyl-thioester to its methyl ester by transfer of a methyl group from S-adenosyl-L-methionine (SAM). It allows to synthesize pimeloyl-ACP via the fatty acid synthetic pathway. This is Malonyl-[acyl-carrier protein] O-methyltransferase from Laribacter hongkongensis (strain HLHK9).